We begin with the raw amino-acid sequence, 53 residues long: UPF0391 membrane protein PC1_0455 (53 aa).

2 helical membrane-spanning segments follow: residues 4-24 (WGIIFLVIALIAAALGFGGLA) and 30-47 (AAKIVFVVGIILFLLSLF).

The protein belongs to the UPF0391 family.

The protein resides in the cell membrane. The chain is UPF0391 membrane protein PC1_0455 from Pectobacterium carotovorum subsp. carotovorum (strain PC1).